We begin with the raw amino-acid sequence, 336 residues long: Ribosomal RNA large subunit methyltransferase F (336 aa).

The protein belongs to the methyltransferase superfamily. METTL16/RlmF family.

The protein localises to the cytoplasm. The catalysed reaction is adenosine(1618) in 23S rRNA + S-adenosyl-L-methionine = N(6)-methyladenosine(1618) in 23S rRNA + S-adenosyl-L-homocysteine + H(+). Specifically methylates the adenine in position 1618 of 23S rRNA. The sequence is that of Ribosomal RNA large subunit methyltransferase F from Yersinia pestis (strain Pestoides F).